Here is a 187-residue protein sequence, read N- to C-terminus: uncharacterized protein (187 aa).

Residues 8-28 (FFILLAINFILAAGFVALVLL) form a helical membrane-spanning segment.

It localises to the membrane. This is an uncharacterized protein from Bacillus subtilis (strain 168).